The sequence spans 447 residues: Elongation factor 1-alpha (447 aa).

A tr-type G domain is found at 5 to 230 (KIHISIVVIG…DQISEPKRPS (226 aa)). The segment at 14–21 (GHVDSGKS) is G1. Residue 14–21 (GHVDSGKS) participates in GTP binding. Residue K55 is modified to N6,N6-dimethyllysine. The segment at 70–74 (GITID) is G2. K79 carries the N6,N6,N6-trimethyllysine modification. Residues 91 to 94 (DAPG) form a G3 region. GTP contacts are provided by residues 91–95 (DAPGH) and 153–156 (NKMD). The tract at residues 153–156 (NKMD) is G4. At K187 the chain carries N6,N6,N6-trimethyllysine. Residues 194–196 (SGF) form a G5 region. N6-methyllysine is present on K261. A 5-glutamyl glycerylphosphorylethanolamine modification is found at E289. Position 306 is an N6,N6,N6-trimethyllysine (K306). At E362 the chain carries 5-glutamyl glycerylphosphorylethanolamine. K396 is subject to N6,N6,N6-trimethyllysine.

This sequence belongs to the TRAFAC class translation factor GTPase superfamily. Classic translation factor GTPase family. EF-Tu/EF-1A subfamily.

Its subcellular location is the cytoplasm. Its function is as follows. This protein promotes the GTP-dependent binding of aminoacyl-tRNA to the A-site of ribosomes during protein biosynthesis. The polypeptide is Elongation factor 1-alpha (Daucus carota (Wild carrot)).